A 339-amino-acid chain; its full sequence is ATPase GET3 (339 aa).

ATP is bound at residue 34 to 41 (KGGVGKTT). Aspartate 63 is a catalytic residue. Residues glutamate 244 and asparagine 271 each contribute to the ATP site. Zn(2+)-binding residues include cysteine 282 and cysteine 285.

This sequence belongs to the arsA ATPase family. Homodimer.

The protein resides in the cytoplasm. It localises to the endoplasmic reticulum. ATPase required for the post-translational delivery of tail-anchored (TA) proteins to the endoplasmic reticulum. Recognizes and selectively binds the transmembrane domain of TA proteins in the cytosol. This complex then targets to the endoplasmic reticulum by membrane-bound receptors, where the tail-anchored protein is released for insertion. This process is regulated by ATP binding and hydrolysis. ATP binding drives the homodimer towards the closed dimer state, facilitating recognition of newly synthesized TA membrane proteins. ATP hydrolysis is required for insertion. Subsequently, the homodimer reverts towards the open dimer state, lowering its affinity for the membrane-bound receptor, and returning it to the cytosol to initiate a new round of targeting. This Podospora anserina (strain S / ATCC MYA-4624 / DSM 980 / FGSC 10383) (Pleurage anserina) protein is ATPase GET3.